A 173-amino-acid polypeptide reads, in one-letter code: RNA pyrophosphohydrolase (173 aa).

The 144-residue stretch at glycine 6–arginine 149 folds into the Nudix hydrolase domain. Positions glycine 38–glycine 59 match the Nudix box motif.

Belongs to the Nudix hydrolase family. RppH subfamily. The cofactor is a divalent metal cation.

In terms of biological role, accelerates the degradation of transcripts by removing pyrophosphate from the 5'-end of triphosphorylated RNA, leading to a more labile monophosphorylated state that can stimulate subsequent ribonuclease cleavage. The polypeptide is RNA pyrophosphohydrolase (Psychrobacter sp. (strain PRwf-1)).